The chain runs to 390 residues: Zinc transporter 8 (390 aa).

A signal peptide spans 1 to 25; the sequence is MRTNTTATVLLAAAVALLLATAARG. The N-linked (GlcNAc...) asparagine glycan is linked to N4. The Extracellular segment spans residues 26–50; it reads DGGDGGCGKEDAAAGRDRARARGLK. A helical membrane pass occupies residues 51–71; that stretch reads IAAFFSILVCGALGCGLPSLG. Topologically, residues 72–82 are cytoplasmic; that stretch reads RHVPALRPDGD. Residues 83-103 form a helical membrane-spanning segment; the sequence is VFFLVKAFAAGVILATGFIHI. The Extracellular segment spans residues 104 to 124; the sequence is LPDAFDNLTDDCLPAGGPWKE. N-linked (GlcNAc...) asparagine glycosylation occurs at N110. Residues 125-145 traverse the membrane as a helical segment; that stretch reads FPFAGFGAMVGAIGTLVVDTL. Residues 146–235 lie on the Cytoplasmic side of the membrane; it reads ATGYFTRALS…DDKETTLRHR (90 aa). The interval 165 to 199 is disordered; the sequence is VADEEKQSAAATQQHNHHHNHHVVGDGGGGGEEHE. The chain crosses the membrane as a helical span at residues 236-256; that stretch reads VISQVLELGIVVHSVIIGISL. Topologically, residues 257 to 267 are extracellular; that stretch reads GASQNPETIKP. Residues 268–288 traverse the membrane as a helical segment; it reads LVVALSFHQMFEGMGLGGCIV. Residues 289 to 296 are Cytoplasmic-facing; the sequence is QAKFKVRS. A helical transmembrane segment spans residues 297–317; it reads IVTMVLFFCLTTPVGIAVGVG. The Extracellular segment spans residues 318–329; that stretch reads ISSVYNESSPTA. N323 carries an N-linked (GlcNAc...) asparagine glycan. The chain crosses the membrane as a helical span at residues 330–350; sequence LVVEGILNSVAAGILIYMALV. At 351–369 the chain is on the cytoplasmic side; that stretch reads DLLAEDFMNPRVQSKGKLQ. The helical transmembrane segment at 370 to 390 threads the bilayer; that stretch reads LGINLAMLAGAGLMSMLAKWA.

The protein belongs to the ZIP transporter (TC 2.A.5) family.

It localises to the cell membrane. Zinc transporter that may mediate zinc uptake from the rhizosphere and may be responsible for the translocation of zinc within the plant. The sequence is that of Zinc transporter 8 (ZIP8) from Oryza sativa subsp. japonica (Rice).